The following is a 98-amino-acid chain: snRNA-activating protein complex subunit 5 (98 aa).

Positions 73-82 (QTTLELSTKS) are enriched in polar residues. The interval 73–98 (QTTLELSTKSHVTEEEEEEEEEESDS) is disordered. Thr-85 is subject to Phosphothreonine. The span at 86-98 (EEEEEEEEEESDS) shows a compositional bias: acidic residues.

In terms of assembly, part of the SNAPc complex composed of 5 subunits: SNAPC1, SNAPC2, SNAPC3, SNAPC4 and SNAPC5. SNAPC5 interacts with SNAPC4.

It is found in the nucleus. Its function is as follows. Part of the SNAPc complex required for the transcription of both RNA polymerase II and III small-nuclear RNA genes. Binds to the proximal sequence element (PSE), a non-TATA-box basal promoter element common to these 2 types of genes. Recruits TBP and BRF2 to the U6 snRNA TATA box. In Homo sapiens (Human), this protein is snRNA-activating protein complex subunit 5 (SNAPC5).